The sequence spans 41 residues: SDGRNEAANDEASDVIELALKGCCSNPVCHLEHPNACGRRR.

A propeptide spanning residues 1–21 (SDGRNEAANDEASDVIELALK) is cleaved from the precursor. Cystine bridges form between Cys23–Cys29 and Cys24–Cys37. The segment at 25–27 (SNP) is ser-Xaa-Pro motif, crucial for potent interaction with nAChR. Cysteine amide is present on Cys37.

It belongs to the conotoxin A superfamily. As to expression, expressed by the venom duct.

It is found in the secreted. In terms of biological role, alpha-conotoxins act on postsynaptic membranes, they bind to the nicotinic acetylcholine receptors (nAChR) and thus inhibit them. This toxin blocks rat neuronal nAChR alpha-3-beta-2/CHRNA3-CHRNB2 (IC(50)=128.9 nM) and alpha-7/CHRNA7 (IC(50)=1511 nM). In vivo, intramuscular injection into zebrafish does not produce any effect on the locomotion of zebrafish. In Conus catus (Cat cone), this protein is Alpha-conotoxin CIB.